Here is a 158-residue protein sequence, read N- to C-terminus: Putative cTAGE family member 3 (158 aa).

A coiled-coil region spans residues Gln26–Asp96.

This sequence belongs to the cTAGE family. As to expression, expressed in normal tissues including colon, mammary gland, ovary, placenta, stomach and testis, as well as several fetal tissues.

Its function is as follows. Tumor-associated antigen. The chain is Putative cTAGE family member 3 (CTAGE3P) from Homo sapiens (Human).